A 270-amino-acid polypeptide reads, in one-letter code: Interleukin-1 alpha (270 aa).

The propeptide occupies 1 to 114; sequence MAKVPDLFED…HDLEETIQPR (114 aa). An N-linked (GlcNAc...) asparagine glycan is attached at Asn64. Position 85 is an N6-acetyllysine (Lys85). The interval 85–89 is nuclear localization signal (NLS); that stretch reads KKRRL. Phosphoserine is present on Ser90. Asn139 and Asn143 each carry an N-linked (GlcNAc...) asparagine glycan.

This sequence belongs to the IL-1 family. In terms of assembly, monomer. Interacts with TMED10; the interaction mediates the translocation from the cytoplasm into the ERGIC (endoplasmic reticulum-Golgi intermediate compartment) and thereby secretion. Interacts with IL1R1. Interacts with S100A13; this interaction is the first step in the export of IL1A, followed by direct translocation of this complex across the plasma membrane. Post-translationally, acetylated within its nuclear localization sequence, which impacts subcellular localization. Proteolytic processed by CAPN1 in a calcium-dependent manner. Cleavage from 31 kDa precursor to 18 kDa biologically active molecules. In terms of processing, phosphorylated. Phosphorylation greatly enhances susceptibility to digestion and promotes the conversion of pre-IL1A alpha to the biologically active IL1A.

It is found in the nucleus. It localises to the cytoplasm. The protein localises to the secreted. In terms of biological role, cytokine constitutively present intracellularly in nearly all resting non-hematopoietic cells that plays an important role in inflammation and bridges the innate and adaptive immune systems. After binding to its receptor IL1R1 together with its accessory protein IL1RAP, forms the high affinity interleukin-1 receptor complex. Signaling involves the recruitment of adapter molecules such as MYD88, IRAK1 or IRAK4. In turn, mediates the activation of NF-kappa-B and the three MAPK pathways p38, p42/p44 and JNK pathways. Within the cell, acts as an alarmin and cell death results in its liberation in the extracellular space after disruption of the cell membrane to induce inflammation and alert the host to injury or damage. In addition to its role as a danger signal, which occurs when the cytokine is passively released by cell necrosis, directly senses DNA damage and acts as a signal for genotoxic stress without loss of cell integrity. The protein is Interleukin-1 alpha of Mus musculus (Mouse).